Here is a 236-residue protein sequence, read N- to C-terminus: MAIYLTELGDSHSFPSPYDALNDPNGLLAFGGDLNPDRILNGYHQGIFPWYGPGEPILWWSPSPRAVFDPLAFKPSKSLKKFQRKQQYKVTLNNATERVIQLCSSTRSAEETWLNEEMQTSYIELARRGHCHSVEVWHDEKLIGGLYGISVGQLFCGESMFSLKDNASKIALWYLCEHLASNQGQLIDCQVMNPHLASLGAFELERDDFVQKLLSLRDRNINLGTFEPQVLQGAVS.

It belongs to the L/F-transferase family.

The protein localises to the cytoplasm. It carries out the reaction N-terminal L-lysyl-[protein] + L-leucyl-tRNA(Leu) = N-terminal L-leucyl-L-lysyl-[protein] + tRNA(Leu) + H(+). The catalysed reaction is N-terminal L-arginyl-[protein] + L-leucyl-tRNA(Leu) = N-terminal L-leucyl-L-arginyl-[protein] + tRNA(Leu) + H(+). It catalyses the reaction L-phenylalanyl-tRNA(Phe) + an N-terminal L-alpha-aminoacyl-[protein] = an N-terminal L-phenylalanyl-L-alpha-aminoacyl-[protein] + tRNA(Phe). Functionally, functions in the N-end rule pathway of protein degradation where it conjugates Leu, Phe and, less efficiently, Met from aminoacyl-tRNAs to the N-termini of proteins containing an N-terminal arginine or lysine. In Vibrio campbellii (strain ATCC BAA-1116), this protein is Leucyl/phenylalanyl-tRNA--protein transferase.